The sequence spans 512 residues: Circadian clock oscillator protein KaiC (512 aa).

KaiC domains are found at residues 1-243 (MQFP…ISIF) and 257-512 (VRVS…SSED). Residues Gly45, Thr46, Gly47, Lys48, Thr49, Ser85, Lys220, Leu221, Arg222, Thr224, His226, Thr286, Gly287, Thr288, Gly289, Lys290, Thr291, and Leu292 each coordinate ATP. A Mg(2+)-binding site is contributed by Thr49. Thr291 lines the Mg(2+) pocket. Glu314 is a binding site for Mg(2+). Residue Trp327 coordinates ATP. Ser427 is modified (phosphoserine; by autocatalysis). Thr428 bears the Phosphothreonine; by autocatalysis mark. The ATP site is built by Arg447, Lys453, Met454, Arg455, Ser457, His459, and Lys461.

The protein belongs to the KaiC family. Homohexamer; hexamerization is dependent on ATP-binding. The KaiABC complex composition changes during the circadian cycle to control KaiC phosphorylation. Complexes KaiC(6), KaiA(2-4):KaiC(6), KaiB(6):KaiC(6) and KaiC(6):KaiB(6):KaiA(12) are among the most important forms, many form cooperatively. KaiC interacts with SasA, activating its autokinase function and leading to RpaA activation. The cofactor is Mg(2+). Phosphorylated on serine and threonine residues by autocatalysis. Has a 4 step phosphorylation cycle; the autokinase acts first on Thr-428, then Ser-427. When Ser-427 is modified KaiC switches to an autophosphatase mode, acting first on phospho-Thr-428 then phospho-Ser-427.

It carries out the reaction L-seryl-[protein] + ATP = O-phospho-L-seryl-[protein] + ADP + H(+). The catalysed reaction is L-threonyl-[protein] + ATP = O-phospho-L-threonyl-[protein] + ADP + H(+). It catalyses the reaction ATP + H2O = ADP + phosphate + H(+). Its activity is regulated as follows. The interaction with KaiA enhances its phosphorylation status, while the interaction with KaiB decreases it. Central component of the KaiABC oscillator complex, which constitutes the main circadian regulator in cyanobacteria. Complex composition changes during the circadian cycle to control KaiC phosphorylation. KaiA stimulates KaiC autophosphorylation, while KaiB sequesters KaiA, leading to KaiC autodephosphorylation. Clock output pathways impact the RpaA transcriptional regulator. KaiC enhances the autophosphorylation activity of SasA, which then transfers its phosphate group to RpaA to activate it. KaiB and KaiC together enhance the phospho-RpaA dephosphatase activity of CikA. Functionally, has a weak, temperature-independent ATPase activity; ATPase activity defines the circadian period. The phosphorylation state of KaiC modulates its ATPase activity and effects KaiB binding. This Parasynechococcus marenigrum (strain WH8102) protein is Circadian clock oscillator protein KaiC.